The primary structure comprises 169 residues: N-alpha-acetyltransferase 50 (169 aa).

The N-acetyltransferase domain occupies 6–155; that stretch reads IELGDVTPHN…DAHVLQKNLK (150 aa). Phosphothreonine is present on threonine 12. Tyrosine 31 lines the substrate pocket. N6-acetyllysine is present on residues lysine 34 and lysine 37. Residue tyrosine 73 is part of the active site. Residue methionine 75 participates in substrate binding. 77-90 is a binding site for acetyl-CoA; it reads LGCLAPYRRLGIGT. A Phosphotyrosine modification is found at tyrosine 110. The active site involves histidine 112. 117–126 contributes to the CoA binding site; the sequence is NESAIDFYRK. The tract at residues 138–141 is substrate; that stretch reads YYKR. N6-acetyllysine is present on lysine 140.

Belongs to the acetyltransferase family. GNAT subfamily. Component of the N-terminal acetyltransferase E (NatE) complex at least composed of NAA10, NAA15 and NAA50. Interacts with NAA10. Interacts with NAA15. Predominantly interacts with NAA15 in the N-terminal acetyltransferase A complex (NatA complex); the interactions reduce the acetylation activity of the NatA complex. Component of the N-terminal acetyltransferase E (NatE)/HYPK complex at least composed of NAA10, NAA15, NAA50 and HYPK. Within the complex interacts with NAA15. Its capacity to interact with the NatA complex is reduced by HYPK. Interacts with NAA35.

It is found in the cytoplasm. Its subcellular location is the nucleus. The enzyme catalyses N-terminal L-methionyl-L-alanyl-[protein] + acetyl-CoA = N-terminal N(alpha)-acetyl-L-methionyl-L-alanyl-[protein] + CoA + H(+). The catalysed reaction is N-terminal L-methionyl-L-seryl-[protein] + acetyl-CoA = N-terminal N(alpha)-acetyl-L-methionyl-L-seryl-[protein] + CoA + H(+). It carries out the reaction N-terminal L-methionyl-L-valyl-[protein] + acetyl-CoA = N-terminal N(alpha)-acetyl-L-methionyl-L-valyl-[protein] + CoA + H(+). It catalyses the reaction N-terminal L-methionyl-L-threonyl-[protein] + acetyl-CoA = N-terminal N(alpha)-acetyl-L-methionyl-L-threonyl-[protein] + CoA + H(+). The enzyme catalyses N-terminal L-methionyl-L-lysyl-[protein] + acetyl-CoA = N-terminal N(alpha)-acetyl-L-methionyl-L-lysyl-[protein] + CoA + H(+). The catalysed reaction is N-terminal L-methionyl-L-leucyl-[protein] + acetyl-CoA = N-terminal N(alpha)-acetyl-L-methionyl-L-leucyl-[protein] + CoA + H(+). It carries out the reaction N-terminal L-methionyl-L-phenylalanyl-[protein] + acetyl-CoA = N-terminal N(alpha)-acetyl-L-methionyl-L-phenylalanyl-[protein] + CoA + H(+). It catalyses the reaction N-terminal L-methionyl-L-tyrosyl-[protein] + acetyl-CoA = N-terminal N(alpha)-acetyl-L-methionyl-L-tyrosyl-[protein] + CoA + H(+). In terms of biological role, N-alpha-acetyltransferase that acetylates the N-terminus of proteins that retain their initiating methionine. Has a broad substrate specificity: able to acetylate the initiator methionine of most peptides, except for those with a proline in second position. Also displays N-epsilon-acetyltransferase activity by mediating acetylation of the side chain of specific lysines on proteins. Autoacetylates in vivo. The relevance of N-epsilon-acetyltransferase activity is however unclear: able to acetylate H4 in vitro, but this result has not been confirmed in vivo. Component of N-alpha-acetyltransferase complexes containing NAA10 and NAA15, which has N-alpha-acetyltransferase activity. Does not influence the acetyltransferase activity of NAA10. However, it negatively regulates the N-alpha-acetyltransferase activity of the N-terminal acetyltransferase A complex (also called the NatA complex). The multiprotein complexes probably constitute the major contributor for N-terminal acetylation at the ribosome exit tunnel, with NAA10 acetylating all amino termini that are devoid of methionine and NAA50 acetylating other peptides. Required for sister chromatid cohesion during mitosis by promoting binding of CDCA5/sororin to cohesin: may act by counteracting the function of NAA10. The polypeptide is N-alpha-acetyltransferase 50 (Mus musculus (Mouse)).